The sequence spans 637 residues: Choline O-acetyltransferase (637 aa).

The segment covering M1–G13 has biased composition (basic and acidic residues). The segment at M1 to K20 is disordered. H329 serves as the catalytic Proton acceptor. Residues G407–D419, S445, and Q545 contribute to the CoA site.

It belongs to the carnitine/choline acetyltransferase family.

The enzyme catalyses choline + acetyl-CoA = acetylcholine + CoA. Catalyzes the reversible synthesis of acetylcholine (ACh) from acetyl CoA and choline at cholinergic synapses. This Danio rerio (Zebrafish) protein is Choline O-acetyltransferase (chat).